Consider the following 441-residue polypeptide: Putative serine/threonine-protein kinase F31E3.2 (441 aa).

Residues 1-16 are compositionally biased toward basic residues; it reads MGNVATRKRPGCHHHI. The segment at 1 to 41 is disordered; it reads MGNVATRKRPGCHHHIGRNEENLDDDEDGPAKKRLRIGEPQ. The 256-residue stretch at 126–381 folds into the Protein kinase domain; the sequence is FVLERQLGRG…FTVLHAHPFF (256 aa). Residues 132–140 and Lys156 each bind ATP; that span reads LGRGSFGVV. The active-site Proton acceptor is the Asp253.

This sequence belongs to the protein kinase superfamily. Ser/Thr protein kinase family.

The catalysed reaction is L-seryl-[protein] + ATP = O-phospho-L-seryl-[protein] + ADP + H(+). The enzyme catalyses L-threonyl-[protein] + ATP = O-phospho-L-threonyl-[protein] + ADP + H(+). This Caenorhabditis elegans protein is Putative serine/threonine-protein kinase F31E3.2.